A 313-amino-acid chain; its full sequence is Secreted mono- and diacylglycerol lipase MDL5 (313 aa).

Positions 1–20 are cleaved as a signal peptide; that stretch reads MQLQYVLTLLWIIFAQNVFS. A disulfide bond links Cys66 and Cys306. Asn72 and Asn111 each carry an N-linked (GlcNAc...) asparagine glycan. Residue Ser180 is the Nucleophile of the active site. Asp238 is an active-site residue. The N-linked (GlcNAc...) asparagine glycan is linked to Asn263. His290 is an active-site residue.

Belongs to the AB hydrolase superfamily. Lipase family. Class 3 subfamily.

The protein resides in the secreted. The protein localises to the cell wall. It carries out the reaction a monoacylglycerol + H2O = glycerol + a fatty acid + H(+). It catalyses the reaction a diacylglycerol + H2O = a monoacylglycerol + a fatty acid + H(+). Its function is as follows. Secreted lipase involved in Dandruff and seborrheic dermatitis (D/SD) probably via lipase-mediated breakdown of sebaceous lipids and release of irritating free fatty acids. Shows activity against monoglyceride and diglyceride substrates, but not triglyceride substrates and does not exhibit regio-selective production of diacylglycerols. Cleaves oleic acid from 1,2 isomers of diolein on both the 1 and the 2 position of the glycerol backbone, resulting mainly in free fatty acids but no monoolein is detected. Shows activity on monoolein and liberates mostly free fatty acids, but can also perform the reverse reaction and produce diolein. This Malassezia globosa (strain ATCC MYA-4612 / CBS 7966) (Dandruff-associated fungus) protein is Secreted mono- and diacylglycerol lipase MDL5.